Reading from the N-terminus, the 133-residue chain is ATP synthase epsilon chain, chloroplastic (133 aa).

It belongs to the ATPase epsilon chain family. As to quaternary structure, F-type ATPases have 2 components, CF(1) - the catalytic core - and CF(0) - the membrane proton channel. CF(1) has five subunits: alpha(3), beta(3), gamma(1), delta(1), epsilon(1). CF(0) has three main subunits: a, b and c.

It localises to the plastid. Its subcellular location is the chloroplast thylakoid membrane. Produces ATP from ADP in the presence of a proton gradient across the membrane. The protein is ATP synthase epsilon chain, chloroplastic of Piper cenocladum (Ant piper).